A 275-amino-acid polypeptide reads, in one-letter code: Membrane protein insertase YidC 1 (275 aa).

An N-terminal signal peptide occupies residues 1-25 (MRKVLRVKKNIKIARIVPLVLLLVA). Cysteine 26 carries N-palmitoyl cysteine lipidation. The S-diacylglycerol cysteine moiety is linked to residue cysteine 26. A run of 5 helical transmembrane segments spans residues 58–78 (SIGVGIILFTLTIRLMLMPLF), 129–149 (YASLLPLLIQMPVMIALFQAL), 171–191 (LYLLPVLAAVFTFLSTWLTNL), 198–216 (VMMTVMIYVMPLMIFFMGF), and 222–240 (VVLYWTVSNAFQVVQLLLL).

Belongs to the OXA1/ALB3/YidC family. Type 2 subfamily.

The protein resides in the cell membrane. Required for the insertion and/or proper folding and/or complex formation of integral membrane proteins into the membrane. Involved in integration of membrane proteins that insert both dependently and independently of the Sec translocase complex, as well as at least some lipoproteins. The chain is Membrane protein insertase YidC 1 from Streptococcus pyogenes serotype M1.